The following is a 374-amino-acid chain: Serine/threonine-protein kinase-transforming protein mos (374 aa).

One can recognise a Protein kinase domain in the interval 94 to 370 (VCLMHRLGSG…LLQRDLKAFR (277 aa)). Residues 100–108 (LGSGGFGSV) and lysine 121 contribute to the ATP site. Aspartate 229 (proton acceptor) is an active-site residue.

This sequence belongs to the protein kinase superfamily. Ser/Thr protein kinase family.

It catalyses the reaction L-seryl-[protein] + ATP = O-phospho-L-seryl-[protein] + ADP + H(+). It carries out the reaction L-threonyl-[protein] + ATP = O-phospho-L-threonyl-[protein] + ADP + H(+). The polypeptide is Serine/threonine-protein kinase-transforming protein mos (V-MOS) (Mus musculus (Mouse)).